Consider the following 149-residue polypeptide: Transcriptional repressor NrdR (149 aa).

The segment at 3-34 (CPFCSAVDTKVIDSRLVGEGTQVRRRRQCVIC) is a zinc-finger region. The region spanning 49-139 (PRVIKSNDVR…VYRSFEDIRE (91 aa)) is the ATP-cone domain.

The protein belongs to the NrdR family. Zn(2+) is required as a cofactor.

Its function is as follows. Negatively regulates transcription of bacterial ribonucleotide reductase nrd genes and operons by binding to NrdR-boxes. The protein is Transcriptional repressor NrdR of Sodalis glossinidius (strain morsitans).